Here is a 543-residue protein sequence, read N- to C-terminus: Chaperonin GroEL (543 aa).

ATP-binding positions include 30 to 33, lysine 51, 87 to 91, glycine 415, 479 to 481, and aspartate 495; these read TLGP, DGTTT, and NAA.

Belongs to the chaperonin (HSP60) family. In terms of assembly, forms a cylinder of 14 subunits composed of two heptameric rings stacked back-to-back. Interacts with the co-chaperonin GroES.

Its subcellular location is the cytoplasm. The enzyme catalyses ATP + H2O + a folded polypeptide = ADP + phosphate + an unfolded polypeptide.. Its function is as follows. Together with its co-chaperonin GroES, plays an essential role in assisting protein folding. The GroEL-GroES system forms a nano-cage that allows encapsulation of the non-native substrate proteins and provides a physical environment optimized to promote and accelerate protein folding. This Francisella philomiragia subsp. philomiragia (strain ATCC 25017 / CCUG 19701 / FSC 153 / O#319-036) protein is Chaperonin GroEL.